Consider the following 1167-residue polypeptide: Tight junction protein 2 (1167 aa).

A PDZ 1 domain is found at 10–97 (TVTLQKDSKR…IAAIVVKRPR (88 aa)). A phosphoserine mark is found at Ser107, Ser127, Ser130, Ser140, Ser145, Ser147, Ser173, Ser194, Ser205, and Ser239. The segment at 129–195 (RSGYSERSRH…SRERSRGRSL (67 aa)) is disordered. The segment at 225 to 286 (SYHEAYEPDY…KGQHDPDRPI (62 aa)) is disordered. Over residues 242–262 (YDRRAHPETRYERSRSREHLR) the composition is skewed to basic and acidic residues. The 79-residue stretch at 287–365 (GVLLTKSKAN…KLQLVVLRDS (79 aa)) folds into the PDZ 2 domain. Residues Ser305, Ser378, Ser380, Ser386, Ser395, Ser404, Ser410, and Ser411 each carry the phosphoserine modification. The disordered stretch occupies residues 381–485 (EVEDISEIES…LRPSPEDEAI (105 aa)). Positions 395 to 426 (SPEERRQQYSDQDYHSSTEKLKERPSSREETS) are enriched in basic and acidic residues. The residue at position 435 (Thr435) is a Phosphothreonine. Ser479 is subject to Phosphoserine. The 82-residue stretch at 489-570 (NTKMVRFKKG…GETVTILAQS (82 aa)) folds into the PDZ 3 domain. The residue at position 554 (Tyr554) is a Phosphotyrosine. Residues 584–649 (GDSFFIRSHF…PNKSRAEQMA (66 aa)) form the SH3 domain. A Guanylate kinase-like domain is found at 660–858 (GDRADFWRMR…WFGSLKDSIQ (199 aa)). Ser684 and Ser884 each carry phosphoserine. Phosphothreonine is present on Thr887. A phosphoserine mark is found at Ser895 and Ser902. Disordered regions lie at residues 904–1055 (FEDT…PRSV) and 1095–1167 (YAVP…DTEL). Phosphothreonine occurs at positions 907 and 915. Residues 938–949 (VQHEENIRKSSP) show a composition bias toward basic and acidic residues. Residues Ser948, Ser960, Ser968, Ser988, and Ser1044 each carry the phosphoserine modification. Basic and acidic residues predominate over residues 976–990 (EPPKARSQNREDSFD). A compositionally biased stretch (acidic residues) spans 1037 to 1049 (ESEEVGESTEEQE). The residue at position 1095 (Tyr1095) is a Phosphotyrosine. A phosphoserine mark is found at Ser1124 and Ser1136. The tract at residues 1165-1167 (TEL) is interaction with SCRIB.

The protein belongs to the MAGUK family. Homodimer. Interacts (via PDZ2 domain) with TJP1/ZO1 (via PDZ2 domain). Interacts with UBN1. Interacts with SCRIB. Interacts with OCLN. Interacts with SAFB in the nucleus. Interacts with USP53 (via the C-terminal region). Interacts with claudins, including CLDN1, CLDN2, CLDN3, CLDN5 and CLDN7. Interacts with CLDN18. Interacts (via N-terminus) with CTNNA1.

Its subcellular location is the cell junction. It localises to the adherens junction. It is found in the cell membrane. The protein resides in the nucleus. The protein localises to the tight junction. Plays a role in tight junctions and adherens junctions. Acts as a positive regulator of RANKL-induced osteoclast differentiation, potentially via mediating downstream transcriptional activity. This chain is Tight junction protein 2, found in Mus musculus (Mouse).